A 404-amino-acid polypeptide reads, in one-letter code: 8-amino-7-oxononanoate synthase (404 aa).

R20 serves as a coordination point for substrate. 116–117 (GY) is a binding site for pyridoxal 5'-phosphate. H141 contacts substrate. Pyridoxal 5'-phosphate is bound by residues S187, H215, and T243. K246 is subject to N6-(pyridoxal phosphate)lysine. Position 366 (T366) interacts with substrate.

This sequence belongs to the class-II pyridoxal-phosphate-dependent aminotransferase family. BioF subfamily. Homodimer. Pyridoxal 5'-phosphate is required as a cofactor.

It catalyses the reaction 6-carboxyhexanoyl-[ACP] + L-alanine + H(+) = (8S)-8-amino-7-oxononanoate + holo-[ACP] + CO2. Its pathway is cofactor biosynthesis; biotin biosynthesis. Functionally, catalyzes the decarboxylative condensation of pimeloyl-[acyl-carrier protein] and L-alanine to produce 8-amino-7-oxononanoate (AON), [acyl-carrier protein], and carbon dioxide. The protein is 8-amino-7-oxononanoate synthase of Cupriavidus necator (strain ATCC 17699 / DSM 428 / KCTC 22496 / NCIMB 10442 / H16 / Stanier 337) (Ralstonia eutropha).